A 307-amino-acid chain; its full sequence is PCP degradation transcriptional activation protein (307 aa).

The region spanning 6 to 63 is the HTH lysR-type domain; the sequence is LPLGHLMVFDALYRHGSAGKAAHALSMPQPTLSRWLAQLRTHFDDPLFVRTRSGMEPT. A DNA-binding region (H-T-H motif) is located at residues 23–42; sequence AGKAAHALSMPQPTLSRWLA.

Belongs to the LysR transcriptional regulatory family.

Functionally, transcriptional activator for the pcpA, pcpB and pcpE genes for pentachlorophenol (PCP) degradation. Essential for PCP degradation. This is PCP degradation transcriptional activation protein (pcpR) from Sphingobium chlorophenolicum.